Here is a 227-residue protein sequence, read N- to C-terminus: MKFPLLLALLVGGAFALHLSSEASDSKSPLVDESLPREAEISRPEVEESPPGEQLMSLEEEEEEEEEEGSGSEGALGNEGAVSGQDVTDENLQSPKEEDTTSLMGDSGFKTGRYLLVRRPECFNKAQLVCRSCYRGTLASIHSFSVNFRIQSFVRGINQGQVWIGGRIVGWGRCKRFRWIDGSSWNFAYWAAGQPRRGGGRCVTLCTRGGHWRRSGCGKRRPFICAY.

Residues 1–16 form the signal peptide; the sequence is MKFPLLLALLVGGAFA. Residues 17 to 110 constitute a propeptide, acidic; sequence LHLSSEASDS…TSLMGDSGFK (94 aa). The interval 21-105 is disordered; sequence SEASDSKSPL…KEEDTTSLMG (85 aa). Ser-24 carries O-linked (GalNAc...) serine glycosylation. Residues 34–46 are compositionally biased toward basic and acidic residues; that stretch reads SLPREAEISRPEV. Acidic residues predominate over residues 58–70; it reads LEEEEEEEEEEGS. Ser-70 carries an O-linked (Xyl...) (chondroitin sulfate) serine glycan. The C-type lectin domain occupies 128 to 227; that stretch reads LVCRSCYRGT…GKRRPFICAY (100 aa). Disulfide bonds link Cys-130-Cys-225 and Cys-202-Cys-217.

Post-translationally, nitrated.

It localises to the secreted. In terms of biological role, cytotoxin and helminthotoxin. MBP also induces non-cytolytic histamine release from basophils. It is involved in antiparasitic defense mechanisms and immune hypersensitivity reactions. The polypeptide is Bone marrow proteoglycan (Prg2) (Rattus norvegicus (Rat)).